A 631-amino-acid chain; its full sequence is Phosphomethylpyrimidine synthase (631 aa).

Residues N239, M268, Y297, H333, 353-355, 394-397, and E433 contribute to the substrate site; these read SRG and DGLR. H437 lines the Zn(2+) pocket. Position 460 (Y460) interacts with substrate. A Zn(2+)-binding site is contributed by H501. C581, C584, and C589 together coordinate [4Fe-4S] cluster.

The protein belongs to the ThiC family. Homodimer. The cofactor is [4Fe-4S] cluster.

The enzyme catalyses 5-amino-1-(5-phospho-beta-D-ribosyl)imidazole + S-adenosyl-L-methionine = 4-amino-2-methyl-5-(phosphooxymethyl)pyrimidine + CO + 5'-deoxyadenosine + formate + L-methionine + 3 H(+). The protein operates within cofactor biosynthesis; thiamine diphosphate biosynthesis. In terms of biological role, catalyzes the synthesis of the hydroxymethylpyrimidine phosphate (HMP-P) moiety of thiamine from aminoimidazole ribotide (AIR) in a radical S-adenosyl-L-methionine (SAM)-dependent reaction. The polypeptide is Phosphomethylpyrimidine synthase (Salmonella gallinarum (strain 287/91 / NCTC 13346)).